A 433-amino-acid polypeptide reads, in one-letter code: Forkhead box protein A2-B (433 aa).

A DNA-binding region (fork-head) is located at residues 147-241 (KPPYSYISLI…ENGCYLRRQK (95 aa)). Positions 247-260 (KKPSLREGGGKKLS) are enriched in basic and acidic residues. Disordered regions lie at residues 247 to 337 (KKPS…QSHL) and 407 to 433 (SGLEPSPISSDTSYYQGGYSRPIMNSS). Residues 261–282 (EGASSVGSVGNSSSERSVGNES) are compositionally biased toward low complexity. Positions 292-302 (EQKRSLVDMKS) are enriched in basic and acidic residues. The segment covering 315–331 (ASQAQHLLSQHHSVLSH) has biased composition (low complexity). Positions 407–421 (SGLEPSPISSDTSYY) are enriched in polar residues.

The protein localises to the nucleus. In terms of biological role, acts as a transcriptional activator during early development, limiting the extent of mesoderm formation in the gastrula. Binds to DNA via the target sequence 5'-GT[AC]AACA-3', with 5'-GTAAACA-3' being the preferred binding site. The chain is Forkhead box protein A2-B (foxa2-b) from Xenopus laevis (African clawed frog).